A 234-amino-acid polypeptide reads, in one-letter code: HTH-type transcriptional regulator ArcR (234 aa).

Residue 40–129 participates in a nucleoside 3',5'-cyclic phosphate binding; sequence VRHYTKGQVI…MAFLCKANDD (90 aa). The region spanning 155–228 is the HTH crp-type domain; the sequence is KFAKDRIIKL…HKNWLVSKHL (74 aa). The H-T-H motif DNA-binding region spans 188–207; it reads IQLMSDMAGISRETAGHIIH.

The protein resides in the cytoplasm. Its function is as follows. Positively regulates the expression of the arcABDCR operon under anaerobic conditions, thus playing an essential role in arginine catabolism. May also control the expression of genes encoding proteins which are involved in anaerobic metabolism. Can bind cyclic AMP. The polypeptide is HTH-type transcriptional regulator ArcR (arcR) (Staphylococcus aureus (strain Mu50 / ATCC 700699)).